Reading from the N-terminus, the 242-residue chain is Venom redulysin 2 (242 aa).

An N-terminal signal peptide occupies residues 1–19 (MSKIWILLLLVGAVQFARG). The propeptide occupies 20 to 46 (FPALEEEQEDDVIDWPSFEYDLSDEER).

This sequence belongs to the redulysin-like family. Post-translationally, contains 5 disulfide bonds. Expressed by the venom gland (posterior main gland) (at protein level).

It is found in the secreted. Functionally, highly abundant protein that may be responsible for the observed disruption of sensory neuron membranes, since it is homologous to proteins such as trialysin, which forms pores in lipid bilayers. Probable insecticidal toxin. This is Venom redulysin 2 from Platymeris rhadamanthus (Red spot assassin bug).